A 958-amino-acid polypeptide reads, in one-letter code: UvrABC system protein A (958 aa).

Positions 1-232 (MQSKSIKIQG…IETALKLGEG (232 aa)) constitute an ABC transporter 1 domain. 33–40 (GLSGSGKS) contributes to the ATP binding site. A C4-type zinc finger spans residues 252–279 (CPICGFSIGELEPRLFSFNSPFGACPSC). ABC transporter domains follow at residues 315 to 593 (QYYP…KYLS) and 604 to 935 (RRKP…GKYL). ATP is bound at residue 639-646 (GVSGSGKS). The C4-type zinc finger occupies 738–764 (CEACRGDGILKIEMHFLPDVYVPCEVC).

It belongs to the ABC transporter superfamily. UvrA family. Forms a heterotetramer with UvrB during the search for lesions.

The protein localises to the cytoplasm. Its function is as follows. The UvrABC repair system catalyzes the recognition and processing of DNA lesions. UvrA is an ATPase and a DNA-binding protein. A damage recognition complex composed of 2 UvrA and 2 UvrB subunits scans DNA for abnormalities. When the presence of a lesion has been verified by UvrB, the UvrA molecules dissociate. The chain is UvrABC system protein A from Oceanobacillus iheyensis (strain DSM 14371 / CIP 107618 / JCM 11309 / KCTC 3954 / HTE831).